Reading from the N-terminus, the 448-residue chain is L-seryl-tRNA(Sec) selenium transferase (448 aa).

The residue at position 284 (lysine 284) is an N6-(pyridoxal phosphate)lysine.

It belongs to the SelA family. Pyridoxal 5'-phosphate is required as a cofactor.

The protein localises to the cytoplasm. The enzyme catalyses L-seryl-tRNA(Sec) + selenophosphate + H(+) = L-selenocysteinyl-tRNA(Sec) + phosphate. Its pathway is aminoacyl-tRNA biosynthesis; selenocysteinyl-tRNA(Sec) biosynthesis; selenocysteinyl-tRNA(Sec) from L-seryl-tRNA(Sec) (bacterial route): step 1/1. Functionally, converts seryl-tRNA(Sec) to selenocysteinyl-tRNA(Sec) required for selenoprotein biosynthesis. The chain is L-seryl-tRNA(Sec) selenium transferase from Nautilia profundicola (strain ATCC BAA-1463 / DSM 18972 / AmH).